The primary structure comprises 145 residues: MKHYEVLFIVKPTLQDDEVKTKVDFVKEVITKNGGEIAAVVEMGTRKLAYKIDKYERGVYFVIYFTAPTKLIAELVRNLRINEDIIRFLTIKYENKKEISAWEKLSHGVKLSENMKKNERKAPKEPVKKDEEENKESEEEITSEE.

Residues 113-132 (ENMKKNERKAPKEPVKKDEE) are compositionally biased toward basic and acidic residues. The interval 113–145 (ENMKKNERKAPKEPVKKDEEENKESEEEITSEE) is disordered. The span at 133–145 (ENKESEEEITSEE) shows a compositional bias: acidic residues.

The protein belongs to the bacterial ribosomal protein bS6 family.

Its function is as follows. Binds together with bS18 to 16S ribosomal RNA. The sequence is that of Small ribosomal subunit protein bS6 from Campylobacter hominis (strain ATCC BAA-381 / DSM 21671 / CCUG 45161 / LMG 19568 / NCTC 13146 / CH001A).